The sequence spans 373 residues: Indole glucosinolate O-methyltransferase 2 (373 aa).

5 residues coordinate S-adenosyl-L-homocysteine: Gly-217, Asp-240, Asp-260, Met-261, and Lys-274. The Proton acceptor role is filled by His-278.

The protein belongs to the class I-like SAM-binding methyltransferase superfamily. Cation-independent O-methyltransferase family.

The protein operates within secondary metabolite biosynthesis. In terms of biological role, involved in indole glucosinolate biosynthesis. Catalyzes methoxylation reactions of the glucosinolate indole ring. Converts the hydroxy intermediates 4-hydroxy-indol-3-yl-methylglucosinolate (4OH-I3M) and 1-hydroxy-indol-3-yl-methylglucosinolate (1OH-I3M) to 4-methoxy-indol-3-yl-methylglucosinolate (4MO-I3M) and 1-methoxy-indol-3-yl-methylglucosinolate (1MO-I3M), respectively. This Arabidopsis thaliana (Mouse-ear cress) protein is Indole glucosinolate O-methyltransferase 2.